Consider the following 223-residue polypeptide: Matrix protein (223 aa).

Positions 1–10 (MLTLFKKGKP) are enriched in basic residues. The disordered stretch occupies residues 1 to 23 (MLTLFKKGKPKGGSVDDRNSSYR). The segment covering 14–23 (SVDDRNSSYR) has biased composition (basic and acidic residues).

As to quaternary structure, homomultimer. Interacts with nucleoprotein and with the cytoplasmic domain of glycoprotein.

Its subcellular location is the virion membrane. It is found in the host endomembrane system. Its function is as follows. Plays a major role in assembly and budding of virion. Completely covers the ribonucleoprotein coil and keep it in condensed bullet-shaped form. Inhibits viral transcription and stimulates replication. The polypeptide is Matrix protein (M) (Bos taurus (Bovine)).